A 230-amino-acid polypeptide reads, in one-letter code: MKSLNTLVILTSVISTSVFAGAYVENREAYNLASDQMEFMLRVGYNSDMGAGIMLTNTYTLQRDDELKHGYNEIEGWYPLFKPTDKLTIQPGGLINDKSIGSGGAVYLDVNYKFTPWFNLTVRNRYNHNNYSSTDLNGELDNNDSYEIGNYWNFIITDKFSYTFEPHYFYNVNDFNSSNGTKHHWEITNTFRYRINEHWLPYFELRWLDRNVGPYHREQNQIRIGAKYFF.

Positions 1–20 are cleaved as a signal peptide; sequence MKSLNTLVILTSVISTSVFA.

The protein belongs to the oligogalacturonate-specific porin KdgM (TC 1.B.35) family. OmpL subfamily.

It localises to the cell outer membrane. Outer membrane channel protein that allows an efficient diffusion of low-molecular-weight solutes such as small sugars and tetraglycine. However, the specific substrate recognized by the OmpL channel is unknown. This Salmonella typhimurium (strain LT2 / SGSC1412 / ATCC 700720) protein is Porin OmpL (ompL).